A 376-amino-acid polypeptide reads, in one-letter code: C2H2 type master regulator of conidiophore development brlA (376 aa).

The segment covering 20–29 (TSFSSASSSA) has biased composition (low complexity). Disordered stretches follow at residues 20-47 (TSFS…ELSL), 197-229 (HHHH…ASPN), and 241-267 (EAQR…PESG). A compositionally biased stretch (polar residues) spans 34 to 44 (TPSSRRSTPNE). Positions 197 to 209 (HHHHHNHHQHHHA) are enriched in basic residues. A compositionally biased stretch (polar residues) spans 219–229 (QLHSNTGASPN). The segment covering 241 to 256 (EAQRKTSELQRAQIRE) has biased composition (basic and acidic residues). The segment at 277-301 (CKCDYPGCNKAFRRNEHLKRHKQTF) adopts a C2H2-type 1; degenerate zinc-finger fold. The segment at 309–332 (FSCEFCGKDQFNRQDNLNNHRKLH) adopts a C2H2-type 2 zinc-finger fold. The interval 351-376 (IIEHEERSRKRRAPPKSKAEKRDYDF) is disordered. The segment covering 367 to 376 (SKAEKRDYDF) has biased composition (basic and acidic residues).

The protein localises to the nucleus. BrlA, abaA and wetA are pivotal regulators of conidiophore development and conidium maturation. They act individually and together to regulate their own expression and that of numerous other sporulation-specific genes. Binds promoters of target genes at brlA response elements (BREs) containing the conserved sequence 5'-(C/A)(A/G)AGGG(G/A)-3'. The protein is C2H2 type master regulator of conidiophore development brlA of Hapsidospora chrysogena (Acremonium chrysogenum).